The following is a 175-amino-acid chain: Alpha-crystallin B chain (175 aa).

N-acetylmethionine is present on Met-1. Ser-19 carries the post-translational modification Phosphoserine. Ser-41 is a glycosylation site (O-linked (GlcNAc) serine). Phosphoserine is present on residues Ser-45 and Ser-59. The sHSP domain occupies 56–164 (RAPSWIDTGL…PERTIPITRE (109 aa)). His-83 contributes to the Zn(2+) binding site. At Lys-92 the chain carries N6-acetyllysine. His-104, Glu-106, His-111, and His-119 together coordinate Zn(2+). The disordered stretch occupies residues 139-175 (SDGVLTMNGPRKQASGPERTIPITREEKPAVTAAPKK). An N6-acetyllysine modification is found at Lys-166. The O-linked (GlcNAc) threonine glycan is linked to Thr-170.

The protein belongs to the small heat shock protein (HSP20) family. As to quaternary structure, heteromer composed of three CRYAA and one CRYAB subunits. Aggregates with homologous proteins, including the small heat shock protein HSPB1, to form large heteromeric complexes. Inter-subunit bridging via zinc ions enhances stability, which is crucial as there is no protein turn over in the lens. Interacts with HSPBAP1 and TTN/titin. Interacts with TMEM109; in the cellular response to DNA damage. Interacts with DES; binds rapidly during early stages of DES filament assembly and a reduced binding seen in the later stages. Interacts with ATP6V1A and with MTOR, forming a ternary complex.

The protein resides in the cytoplasm. It localises to the nucleus. The protein localises to the secreted. Its subcellular location is the lysosome. In terms of biological role, may contribute to the transparency and refractive index of the lens. Has chaperone-like activity, preventing aggregation of various proteins under a wide range of stress conditions. In lens epithelial cells, stabilizes the ATP6V1A protein, preventing its degradation by the proteasome. The polypeptide is Alpha-crystallin B chain (CRYAB) (Ovis aries (Sheep)).